The following is a 395-amino-acid chain: Digeranylgeranylglycerophospholipid reductase (395 aa).

9 residues coordinate FAD: Ala15, Asp34, Cys45, Ala46, Ala48, Arg97, Ala121, Asp276, and Gly288. Arg329 serves as a coordination point for a 2,3-bis-O-(geranylgeranyl)-sn-glycerol 1-phospholipid.

This sequence belongs to the geranylgeranyl reductase family. DGGGPL reductase subfamily. FAD is required as a cofactor.

The enzyme catalyses a 2,3-bis-O-phytanyl-sn-glycerol 1-phospholipid + 8 A = a 2,3-bis-O-(geranylgeranyl)-sn-glycerol 1-phospholipid + 8 AH2. It catalyses the reaction 2,3-bis-O-(phytanyl)-sn-glycerol 1-phosphate + 8 A = 2,3-bis-O-(geranylgeranyl)-sn-glycerol 1-phosphate + 8 AH2. The catalysed reaction is CDP-2,3-bis-O-(geranylgeranyl)-sn-glycerol + 8 AH2 = CDP-2,3-bis-O-(phytanyl)-sn-glycerol + 8 A. It carries out the reaction archaetidylserine + 8 AH2 = 2,3-bis-O-phytanyl-sn-glycero-3-phospho-L-serine + 8 A. It functions in the pathway membrane lipid metabolism; glycerophospholipid metabolism. Its function is as follows. Is involved in the reduction of 2,3-digeranylgeranylglycerophospholipids (unsaturated archaeols) into 2,3-diphytanylglycerophospholipids (saturated archaeols) in the biosynthesis of archaeal membrane lipids. Catalyzes the formation of archaetidic acid (2,3-di-O-phytanyl-sn-glyceryl phosphate) from 2,3-di-O-geranylgeranylglyceryl phosphate (DGGGP) via the hydrogenation of each double bond of the isoprenoid chains. Is also probably able to reduce double bonds of geranyl groups in CDP-2,3-bis-O-(geranylgeranyl)-sn-glycerol and archaetidylserine, thus acting at various stages in the biosynthesis of archaeal membrane lipids. The protein is Digeranylgeranylglycerophospholipid reductase of Thermococcus kodakarensis (strain ATCC BAA-918 / JCM 12380 / KOD1) (Pyrococcus kodakaraensis (strain KOD1)).